Here is a 400-residue protein sequence, read N- to C-terminus: CCA-adding enzyme (400 aa).

Residues Gly-28 and Arg-31 each coordinate ATP. Gly-28 and Arg-31 together coordinate CTP. Positions 41 and 43 each coordinate Mg(2+). ATP is bound by residues Arg-112, Asp-155, Arg-158, Arg-161, and Arg-164. Arg-112, Asp-155, Arg-158, Arg-161, and Arg-164 together coordinate CTP.

The protein belongs to the tRNA nucleotidyltransferase/poly(A) polymerase family. Bacterial CCA-adding enzyme type 3 subfamily. Homodimer. Requires Mg(2+) as cofactor.

It carries out the reaction a tRNA precursor + 2 CTP + ATP = a tRNA with a 3' CCA end + 3 diphosphate. It catalyses the reaction a tRNA with a 3' CCA end + 2 CTP + ATP = a tRNA with a 3' CCACCA end + 3 diphosphate. In terms of biological role, catalyzes the addition and repair of the essential 3'-terminal CCA sequence in tRNAs without using a nucleic acid template. Adds these three nucleotides in the order of C, C, and A to the tRNA nucleotide-73, using CTP and ATP as substrates and producing inorganic pyrophosphate. tRNA 3'-terminal CCA addition is required both for tRNA processing and repair. Also involved in tRNA surveillance by mediating tandem CCA addition to generate a CCACCA at the 3' terminus of unstable tRNAs. While stable tRNAs receive only 3'-terminal CCA, unstable tRNAs are marked with CCACCA and rapidly degraded. The chain is CCA-adding enzyme from Staphylococcus aureus (strain COL).